Consider the following 600-residue polypeptide: ATP-dependent lipid A-core flippase (600 aa).

4 helical membrane passes run 27–47 (ISLF…QPML), 83–103 (LLII…NYFL), 174–194 (LLFM…LIAV), and 267–287 (PLLQ…VLYL). Positions 31–322 (LISIVGFLIF…LSEVSSTIQK (292 aa)) constitute an ABC transmembrane type-1 domain. Positions 354–590 (LDVRNLSFTY…NGYYARLNAM (237 aa)) constitute an ABC transporter domain. 388 to 395 (GRSGSGKS) provides a ligand contact to ATP.

This sequence belongs to the ABC transporter superfamily. Lipid exporter (TC 3.A.1.106) family. Homodimer.

It is found in the cell inner membrane. The catalysed reaction is ATP + H2O + lipid A-core oligosaccharideSide 1 = ADP + phosphate + lipid A-core oligosaccharideSide 2.. Functionally, involved in lipopolysaccharide (LPS) biosynthesis. Translocates lipid A-core from the inner to the outer leaflet of the inner membrane. Transmembrane domains (TMD) form a pore in the inner membrane and the ATP-binding domain (NBD) is responsible for energy generation. In Pseudomonas fluorescens (strain Pf0-1), this protein is ATP-dependent lipid A-core flippase.